Reading from the N-terminus, the 169-residue chain is CKLF-like MARVEL transmembrane domain-containing protein 1 (169 aa).

Residues 17 to 135 (NLKQPETAAA…DAFVVTTKMR (119 aa)) form the MARVEL domain. 4 helical membrane passes run 22-42 (ETAA…ITQA), 46-66 (FITI…IYVL), 79-99 (LLDL…AILA), and 110-130 (YVGG…AFVV).

It belongs to the chemokine-like factor family. Highly expressed in testis.

It is found in the membrane. This chain is CKLF-like MARVEL transmembrane domain-containing protein 1 (CMTM1), found in Homo sapiens (Human).